The sequence spans 607 residues: UvrABC system protein C (607 aa).

In terms of domain architecture, GIY-YIG spans 19–97; the sequence is TLSGVYQMRD…IKQYQPKFNI (79 aa). The 36-residue stretch at 205–240 folds into the UVR domain; the sequence is EHLLQTLTEHMLQASAAQQYERAAIVRDQISELRTI.

Belongs to the UvrC family. Interacts with UvrB in an incision complex.

It is found in the cytoplasm. In terms of biological role, the UvrABC repair system catalyzes the recognition and processing of DNA lesions. UvrC both incises the 5' and 3' sides of the lesion. The N-terminal half is responsible for the 3' incision and the C-terminal half is responsible for the 5' incision. The chain is UvrABC system protein C from Dichelobacter nodosus (strain VCS1703A).